A 406-amino-acid chain; its full sequence is Succinylornithine transaminase (406 aa).

Position 252 is an N6-(pyridoxal phosphate)lysine (K252).

The protein belongs to the class-III pyridoxal-phosphate-dependent aminotransferase family. AstC subfamily. It depends on pyridoxal 5'-phosphate as a cofactor.

The catalysed reaction is N(2)-succinyl-L-ornithine + 2-oxoglutarate = N-succinyl-L-glutamate 5-semialdehyde + L-glutamate. Its pathway is amino-acid degradation; L-arginine degradation via AST pathway; L-glutamate and succinate from L-arginine: step 3/5. Functionally, catalyzes the transamination of N(2)-succinylornithine and alpha-ketoglutarate into N(2)-succinylglutamate semialdehyde and glutamate. Can also act as an acetylornithine aminotransferase. In Shigella boydii serotype 18 (strain CDC 3083-94 / BS512), this protein is Succinylornithine transaminase.